The following is a 110-amino-acid chain: Holo-[acyl-carrier-protein] synthase (110 aa).

Residues Asp8 and Glu54 each coordinate Mg(2+).

This sequence belongs to the P-Pant transferase superfamily. AcpS family. Mg(2+) serves as cofactor.

Its subcellular location is the cytoplasm. It carries out the reaction apo-[ACP] + CoA = holo-[ACP] + adenosine 3',5'-bisphosphate + H(+). Transfers the 4'-phosphopantetheine moiety from coenzyme A to a Ser of acyl-carrier-protein. This Mycoplasma capricolum subsp. capricolum (strain California kid / ATCC 27343 / NCTC 10154) protein is Holo-[acyl-carrier-protein] synthase.